The following is a 271-amino-acid chain: Putative cysteine protease YopT-like blr2140 (271 aa).

Residues 1–81 form a disordered region; sequence MYDRIGGSST…STSSPESPAT (81 aa). Residues 7–29 are compositionally biased toward polar residues; the sequence is GSSTRTSQTDEPSQSVDSGSFTE. Low complexity predominate over residues 65–81; that stretch reads TSSASEPSTSSPESPAT. Cys-100 is a catalytic residue. The interval 114 to 136 is disordered; it reads SPSTRMSALTPGSQTHASAAERQ. Residues His-213 and Asp-228 contribute to the active site.

The protein belongs to the peptidase C58 family.

Its function is as follows. Potential cysteine protease, which may play a central role after invasion of host cell. The chain is Putative cysteine protease YopT-like blr2140 from Bradyrhizobium diazoefficiens (strain JCM 10833 / BCRC 13528 / IAM 13628 / NBRC 14792 / USDA 110).